The following is a 722-amino-acid chain: Glycine--tRNA ligase beta subunit (722 aa).

Belongs to the class-II aminoacyl-tRNA synthetase family. As to quaternary structure, tetramer of two alpha and two beta subunits.

The protein localises to the cytoplasm. It carries out the reaction tRNA(Gly) + glycine + ATP = glycyl-tRNA(Gly) + AMP + diphosphate. In Synechocystis sp. (strain ATCC 27184 / PCC 6803 / Kazusa), this protein is Glycine--tRNA ligase beta subunit (glyS).